The sequence spans 875 residues: Protein translocase subunit SecA (875 aa).

Residues glutamine 87, 105–109 (GEGKT), and aspartate 512 contribute to the ATP site. Zn(2+) is bound by residues cysteine 860, cysteine 862, cysteine 871, and histidine 872.

This sequence belongs to the SecA family. In terms of assembly, monomer and homodimer. Part of the essential Sec protein translocation apparatus which comprises SecA, SecYEG and auxiliary proteins SecDF-YajC and YidC. Requires Zn(2+) as cofactor.

It localises to the cell inner membrane. The protein resides in the cytoplasm. The catalysed reaction is ATP + H2O + cellular proteinSide 1 = ADP + phosphate + cellular proteinSide 2.. In terms of biological role, part of the Sec protein translocase complex. Interacts with the SecYEG preprotein conducting channel. Has a central role in coupling the hydrolysis of ATP to the transfer of proteins into and across the cell membrane, serving both as a receptor for the preprotein-SecB complex and as an ATP-driven molecular motor driving the stepwise translocation of polypeptide chains across the membrane. The polypeptide is Protein translocase subunit SecA (Buchnera aphidicola subsp. Acyrthosiphon pisum (strain APS) (Acyrthosiphon pisum symbiotic bacterium)).